The chain runs to 150 residues: Large ribosomal subunit protein bL9 (150 aa).

Belongs to the bacterial ribosomal protein bL9 family.

Binds to the 23S rRNA. In Shewanella halifaxensis (strain HAW-EB4), this protein is Large ribosomal subunit protein bL9.